A 288-amino-acid polypeptide reads, in one-letter code: Shikimate kinase (288 aa).

Residue 81–91 (PVASGLKSSSA) participates in ATP binding.

Belongs to the GHMP kinase family. Archaeal shikimate kinase subfamily.

The protein localises to the cytoplasm. It carries out the reaction shikimate + ATP = 3-phosphoshikimate + ADP + H(+). It functions in the pathway metabolic intermediate biosynthesis; chorismate biosynthesis; chorismate from D-erythrose 4-phosphate and phosphoenolpyruvate: step 5/7. This chain is Shikimate kinase, found in Methanothrix thermoacetophila (strain DSM 6194 / JCM 14653 / NBRC 101360 / PT) (Methanosaeta thermophila).